We begin with the raw amino-acid sequence, 130 residues long: Immunoglobulin kappa chain variable 9-120 (130 aa).

Positions 1 to 22 (MDMRAPAQIFGFLLLLFQGTRC) are cleaved as a signal peptide. The interval 23-45 (DIQMTQSPSSLSASLGERVSLTC) is framework-1. C45 and C110 are joined by a disulfide. Residues 46 to 56 (RASQDIGSSLN) are complementarity-determining-1. Positions 57-71 (WLQQEPDGTIKRLIY) are framework-2. A complementarity-determining-2 region spans residues 72-78 (ATSSLDS). Positions 79–110 (GVPKRFSGSRSGSDYSLTISSLESEDFVDYYC) are framework-3. The complementarity-determining-3 stretch occupies residues 111–119 (LQYASSPWT). The interval 120-129 (FGGGTKLEIK) is framework-4.

This chain is Immunoglobulin kappa chain variable 9-120, found in Mus musculus (Mouse).